A 152-amino-acid polypeptide reads, in one-letter code: Transcriptional regulator MraZ (152 aa).

SpoVT-AbrB domains follow at residues 5–52 (ASAV…PLNQ) and 81–124 (ATEC…SESE).

The protein belongs to the MraZ family. In terms of assembly, forms oligomers.

Its subcellular location is the cytoplasm. It is found in the nucleoid. The sequence is that of Transcriptional regulator MraZ from Histophilus somni (strain 2336) (Haemophilus somnus).